The sequence spans 1407 residues: DNA-directed RNA polymerase subunit beta' (1407 aa).

4 residues coordinate Zn(2+): cysteine 70, cysteine 72, cysteine 85, and cysteine 88. Aspartate 460, aspartate 462, and aspartate 464 together coordinate Mg(2+). The Zn(2+) site is built by cysteine 814, cysteine 888, cysteine 895, and cysteine 898.

Belongs to the RNA polymerase beta' chain family. As to quaternary structure, the RNAP catalytic core consists of 2 alpha, 1 beta, 1 beta' and 1 omega subunit. When a sigma factor is associated with the core the holoenzyme is formed, which can initiate transcription. Requires Mg(2+) as cofactor. The cofactor is Zn(2+).

It carries out the reaction RNA(n) + a ribonucleoside 5'-triphosphate = RNA(n+1) + diphosphate. Its function is as follows. DNA-dependent RNA polymerase catalyzes the transcription of DNA into RNA using the four ribonucleoside triphosphates as substrates. This is DNA-directed RNA polymerase subunit beta' from Salmonella arizonae (strain ATCC BAA-731 / CDC346-86 / RSK2980).